The chain runs to 498 residues: Protein flp (498 aa).

The next 4 membrane-spanning stretches (helical) occupy residues Leu-6–Thr-26, Phe-389–Tyr-409, Leu-433–Leu-453, and Leu-471–Leu-491.

Its subcellular location is the cell membrane. Functionally, its precise function is unknown. Has no penicillin-binding activity and is not involved in methicillin resistance. The chain is Protein flp (flp) from Staphylococcus aureus (strain NCTC 8325 / PS 47).